Here is a 232-residue protein sequence, read N- to C-terminus: Ribose-5-phosphate isomerase A (232 aa).

Residues 28 to 31, 83 to 86, and 96 to 99 contribute to the substrate site; these read TGST, DGAD, and KGGG. The active-site Proton acceptor is glutamate 105. A substrate-binding site is contributed by lysine 123.

It belongs to the ribose 5-phosphate isomerase family. In terms of assembly, homodimer.

The enzyme catalyses aldehydo-D-ribose 5-phosphate = D-ribulose 5-phosphate. It participates in carbohydrate degradation; pentose phosphate pathway; D-ribose 5-phosphate from D-ribulose 5-phosphate (non-oxidative stage): step 1/1. Functionally, catalyzes the reversible conversion of ribose-5-phosphate to ribulose 5-phosphate. This chain is Ribose-5-phosphate isomerase A, found in Rhizobium leguminosarum bv. trifolii (strain WSM2304).